The chain runs to 99 residues: DNA-binding protein HU (99 aa).

The segment at 67–86 is disordered; it reads REGRNPKTGAKMKIDAYNQP.

This sequence belongs to the bacterial histone-like protein family. As to quaternary structure, homodimer.

Functionally, histone-like DNA-binding protein which is capable of wrapping DNA to stabilize it, and thus to prevent its denaturation under extreme environmental conditions. The chain is DNA-binding protein HU (hup) from Rickettsia conorii (strain ATCC VR-613 / Malish 7).